A 357-amino-acid polypeptide reads, in one-letter code: MTDLKFTDLVEPVVIDKKTALRVTVLGGGSFGTAMANLATRNGCNTMIWIRDQKMADEINQTHFNQRYLPDFNLEPELKAVSDLELAVRDRDIIFVAIPSHSFREVVKQISPYITAQAIVSLTKGIEANTFSFMSDIIREELPEVPYGVLSGPNLAKEIVAGMPSGTVIASDSELVRYAVQHALHSALFRVFGSDDVHGVELGGALKNIYAIAMGMAAAYNIGENTKSMIITRALAEMSRFAVKLGANPLTFLGLSGVGDLFATCNSPLSRNYQIGYALGSGKTLDQAIKALGQTAEGINTIVQVRTRAIELDVYMPITNALYEVIFEGAPPLNIALALMKNGHRSDVEFVLPHHQV.

Residues serine 30, phenylalanine 31, arginine 51, and lysine 124 each coordinate NADPH. Positions 124 and 152 each coordinate sn-glycerol 3-phosphate. Alanine 156 serves as a coordination point for NADPH. Sn-glycerol 3-phosphate is bound by residues lysine 207, aspartate 260, serine 270, arginine 271, and asparagine 272. Lysine 207 (proton acceptor) is an active-site residue. Residue arginine 271 coordinates NADPH. Residue glutamate 297 coordinates NADPH.

It belongs to the NAD-dependent glycerol-3-phosphate dehydrogenase family.

The protein localises to the cytoplasm. It catalyses the reaction sn-glycerol 3-phosphate + NAD(+) = dihydroxyacetone phosphate + NADH + H(+). The catalysed reaction is sn-glycerol 3-phosphate + NADP(+) = dihydroxyacetone phosphate + NADPH + H(+). Its pathway is membrane lipid metabolism; glycerophospholipid metabolism. Functionally, catalyzes the reduction of the glycolytic intermediate dihydroxyacetone phosphate (DHAP) to sn-glycerol 3-phosphate (G3P), the key precursor for phospholipid synthesis. The chain is Glycerol-3-phosphate dehydrogenase [NAD(P)+] from Acinetobacter baylyi (strain ATCC 33305 / BD413 / ADP1).